Consider the following 559-residue polypeptide: MDNQSTINNNGNNKVQQKVRSACDACQSAKVRCGREKPTCRRCQNQGKTCVYSHARPLGRPRKSGSASSTTTMTTTTVNMNDLRDDAMIIAGSVNGDSEYGSPTRFRSISRVNNDHGMNMNMNNDWPGIPPLPSAGPRIPDILLDDSDENYMDMFMSVRLLGSLSGPSTVTDHHPLPPPEEEDGQEGYQNQHQHHNDPHSLIADPSAATEWDLGFPFDQHSSSESLSLEPSSAGAHPGDIPTSSLSKDGMDFTHTRGSQKISPNPHSIDSRTSSRDKSFNHHRSLSTLGSRTPNTTTTSSSASSVGLTGSSTTGFSRRFRGGGGGVLSLSRRRTECTCCDSMLQILAELDRHIADRSAISLDLIIKLEKETRAQTVAILHCDLCSQTFRPRILILSGLVLEAVVELLEEILHQHQLLGYSTATTTSNTTSSSLSSSLSSSSWIPSGPAGMELASPPPSIFDNNNTSTTTTTSSISTANRPGKTVDICSLWLGDYEISGPEKQEFLKHLLTARLRDIAATIHQLHETMNRYRHRPAFKVGTLMLGEIYRHVQAIVKTLDQ.

Residues Cys23 to Cys50 constitute a DNA-binding region (zn(2)-C6 fungal-type). Disordered regions lie at residues Gly166 to Ser316 and Ala453 to Ala477. Positions Ser222–Ser232 are enriched in low complexity. Polar residues predominate over residues Thr255–Ser267. A compositionally biased stretch (basic and acidic residues) spans Ile268–Phe279. Low complexity-rich tracts occupy residues Ser286–Ser316 and Asn462–Ala477.

The protein localises to the nucleus. Its function is as follows. Transcription factore; part of the gene cluster that mediates the biosynthesis of the antihypercholesterolemic agents phomoidrides which are dimeric anhydrides. Probably regulates the expression of the genes from the cluster. This Talaromyces stipitatus (strain ATCC 10500 / CBS 375.48 / QM 6759 / NRRL 1006) (Penicillium stipitatum) protein is Transcription factor tstO.